We begin with the raw amino-acid sequence, 316 residues long: Cation efflux system protein CzcD (316 aa).

The next 6 helical transmembrane spans lie at 17 to 37 (LKIA…GGVM), 47 to 67 (AAHM…IAIA), 82 to 102 (FEIL…IYIL), 115 to 135 (IEST…LISM), 152 to 172 (YLEV…AIII), and 174 to 194 (FTGW…WVLP).

The protein belongs to the cation diffusion facilitator (CDF) transporter (TC 2.A.4) family. SLC30A subfamily.

The protein localises to the cell membrane. Functionally, necessary for activation of the czc determinant. The protein is Cation efflux system protein CzcD (czcD) of Alcaligenes sp. (strain CT14).